The following is an 825-amino-acid chain: Actin filament-associated protein 1-like 2 (825 aa).

At Y56 the chain carries Phosphotyrosine. The tract at residues 62–163 (VNGEQNSASP…SKGKAAPYQW (102 aa)) is disordered. Polar residues predominate over residues 80–94 (PLTNGEPSQHSSAPQ). The residue at position 113 (T113) is a Phosphothreonine. PH domains follow at residues 175–271 (DARI…EVSG) and 353–447 (SLET…SESG). S408 bears the Phosphoserine mark. The residue at position 413 (Y413) is a Phosphotyrosine. Residue S484 is modified to Phosphoserine. A disordered region spans residues 571 to 614 (TLTVDPKPGTTPEEPHTESPGDPEVQQRQPEVQESSEPIEPTPR). Positions 593 to 608 (PEVQQRQPEVQESSEP) are enriched in low complexity. Positions 657–754 (AEIKLGKNRT…VKDNLKKAEA (98 aa)) form a coiled coil. A disordered region spans residues 757–801 (VTLGTTVDTTHLDNMSPRPQPKAATPNPPPDSTPVNSASVLKNRP). Residues 759-769 (LGTTVDTTHLD) are compositionally biased toward polar residues.

Interacts with SRC. Interacts with LCK when tyrosine phosphorylated. Post-translationally, tyrosine phosphorylated (by SRC).

The protein resides in the cytoplasm. Its function is as follows. May play a role in a signaling cascade by enhancing the kinase activity of SRC. Contributes to SRC-regulated transcription activation. The chain is Actin filament-associated protein 1-like 2 (Afap1l2) from Mus musculus (Mouse).